A 356-amino-acid chain; its full sequence is Carbohydrate sulfotransferase 10 (356 aa).

Residues Met1–Leu6 lie on the Cytoplasmic side of the membrane. A helical; Signal-anchor for type II membrane protein membrane pass occupies residues Leu7–Leu27. Over Thr28–Asn356 the chain is Lumenal. N-linked (GlcNAc...) asparagine glycosylation is present at Asn99. 3'-phosphoadenylyl sulfate-binding positions include Pro127 to Gln133 and Arg189 to Ser197. N-linked (GlcNAc...) asparagine glycans are attached at residues Asn228 and Asn316.

It belongs to the sulfotransferase 2 family. In terms of tissue distribution, in fetal tissues, it is predominantly expressed in brain, and weakly expressed in lung, kidney and liver. In adult, it is highly expressed in brain, testis, ovary, expressed at intermediate level in heart, pancreas, skeletal muscle, spleen and thymus, and weakly expressed in other tissues. In brain, it is expressed at higher level in the frontal lobe.

It is found in the golgi apparatus membrane. It carries out the reaction 3-O-{beta-D-GlcA-(1-&gt;[3)-alpha-D-Xyl-(1-&gt;3)-beta-D-GlcA-(1-&gt;](n)-4)-beta-D-Xyl-(1-&gt;4)-Rib-ol-P-Rib-ol-P-3-beta-D-GalNAc-(1-&gt;3)-beta-D-GlcNAc-(1-&gt;4)-O-6-P-alpha-D-Man}-L-Thr-[protein] + 3'-phosphoadenylyl sulfate = 3-O-{O-3-S-beta-D-GlcA-(1-&gt;[3)-alpha-D-Xyl-(1-&gt;3)-beta-D-GlcA-(1-&gt;](n)-4)-beta-D-Xyl-(1-&gt;4)-Rib-ol-P-Rib-ol-P-3-beta-D-GalNAc-(1-&gt;3)-beta-D-GlcNAc-(1-&gt;4)-O-6-P-alpha-D-Man}-L-Thr-[protein] + adenosine 3',5'-bisphosphate + H(+). The enzyme catalyses 17beta-estradiol 3-O-(beta-D-glucuronate) + 3'-phosphoadenylyl sulfate = 17beta-estradiol 3-O-(3-sulfo-beta-D-glucuronate) + adenosine 3',5'-bisphosphate + H(+). It catalyses the reaction 17beta-estradiol 3-O-(beta-D-glucuronate) 17-sulfate + 3'-phosphoadenylyl sulfate = 17beta-estradiol 3-O-(3-sulfo-beta-D-glucuronate) 17-sulfate + adenosine 3',5'-bisphosphate + H(+). The catalysed reaction is 17beta-estradiol 17-O-(beta-D-glucuronate) + 3'-phosphoadenylyl sulfate = 17beta-estradiol 17-O-(3-sulfo-beta-D-glucuronate) + adenosine 3',5'-bisphosphate + H(+). It carries out the reaction 16alpha,17beta-estriol 3-O-(beta-D-glucuronate) + 3'-phosphoadenylyl sulfate = 16alpha,17beta-estriol 3-O-(3-sulfo-beta-D-glucuronate) + adenosine 3',5'-bisphosphate + H(+). The enzyme catalyses 16alpha,17beta-estriol 16-O-(beta-D-glucuronate) + 3'-phosphoadenylyl sulfate = 16alpha,17beta-estriol 16-O-(3-sulfo-beta-D-glucuronate) + adenosine 3',5'-bisphosphate + H(+). It catalyses the reaction 16alpha,17beta-estriol 17-O-(beta-D-glucuronate) + 3'-phosphoadenylyl sulfate = 16alpha,17beta-estriol 17-O-(3-sulfo-beta-D-glucuronate) + adenosine 3',5'-bisphosphate + H(+). The catalysed reaction is estrone 3-O-(beta-D-glucuronate) + 3'-phosphoadenylyl sulfate = estrone 3-O-(3-sulfo-beta-D-glucuronate) + adenosine 3',5'-bisphosphate + H(+). It carries out the reaction 3alpha,20alpha-dihydroxy-5beta-pregnane 3-O-(beta-D-glucuronate) + 3'-phosphoadenylyl sulfate = 3alpha,20alpha-dihydroxy-5beta-pregnane 3-O-(3-sulfo-beta-D-glucuronate) + adenosine 3',5'-bisphosphate + H(+). The enzyme catalyses testosterone 17-O-(beta-D-glucuronate) + 3'-phosphoadenylyl sulfate = testosterone 17-O-(3-sulfo-beta-D-glucuronate) + adenosine 3',5'-bisphosphate + H(+). It catalyses the reaction 3beta-androst-5-en-17-one 3-O-(beta-D-glucuronate) + 3'-phosphoadenylyl sulfate = 3beta-androst-5-en-17-one 3-O-(3-sulfo-beta-D-glucuronate) + adenosine 3',5'-bisphosphate + H(+). The catalysed reaction is 3alpha,17alpha-dihydroxy-5beta-androstane-11-one-17beta-carboxylate 3-O-(beta-D-glucuronate) + 3'-phosphoadenylyl sulfate = 3alpha,17alpha-dihydroxy-5beta-androstane-11-one-17beta-carboxylate 3-O-(3-sulfo-beta-D-glucuronate) + adenosine 3',5'-bisphosphate + H(+). It carries out the reaction 3alpha-hydroxyetiocholan-17-one 3-O-(beta-D-glucuronate) + 3'-phosphoadenylyl sulfate = 3alpha-hydroxyetiocholan-17-one 3-O-(3-sulfo-beta-D-glucuronate) + adenosine 3',5'-bisphosphate + H(+). It functions in the pathway steroid metabolism. The protein operates within protein modification; carbohydrate sulfation. Catalyzes the transfer of sulfate from 3'-phosphoadenylyl sulfate (PAPS) to position 3 of terminal glucuronic acid of both protein- and lipid-linked oligosaccharides. Participates in biosynthesis of HNK-1 carbohydrate structure 3-O-sulfo-beta-D-GlcA-(1-&gt;3)-beta-D-Gal-(1-&gt;4)-D-GlcNAc-R, a sulfated glucuronyl-lactosaminyl residue carried by many neural recognition molecules, which is involved in cell interactions during ontogenetic development and in synaptic plasticity in the adult. May be indirectly involved in synapse plasticity of the hippocampus, via its role in HNK-1 biosynthesis. Sulfates terminal glucuronyl residue of the laminin globular (LG)-domain binding epitope on DAG1/alpha-dystroglycan and prevents further polymerization by LARGE1 glycosyltransferase. Likely defines the chain length of LG epitope, conferring binding specificity to extracellular matrix components. Plays a role in down-regulating the steroid hormones. Sulfates glucuronidated estrogens and androgens with an impact in hormone cycle and fertility. Has a preference for glucuronyl moiety at the 3-hydroxyl group of a sterol ring rather than the 17-hydroxyl group, showing high catalytic efficiency for 17beta-estradiol 3-O-(beta-D-glucuronate) and dehydroepiandrosterone 3-O-(beta-D-glucuronate) hormones. In Homo sapiens (Human), this protein is Carbohydrate sulfotransferase 10.